Reading from the N-terminus, the 286-residue chain is uncharacterized protein (286 aa).

One can recognise a Radical SAM core domain in the interval V2–R221. 3 residues coordinate [4Fe-4S] cluster: C16, C20, and C23.

The protein belongs to the radical SAM superfamily. Anaerobic sulfatase-maturating enzyme family. Requires [4Fe-4S] cluster as cofactor.

This is an uncharacterized protein from Methanocaldococcus jannaschii (strain ATCC 43067 / DSM 2661 / JAL-1 / JCM 10045 / NBRC 100440) (Methanococcus jannaschii).